The primary structure comprises 267 residues: Strigolactone esterase D14 (267 aa).

The active-site Nucleophile is the S97. Residues D218 and H247 contribute to the active site.

Belongs to the AB hydrolase superfamily. As to quaternary structure, interacts with SMXL6, SMXL7 and SMXL8. The interaction with SMXLs occurs in the presence of (2'R) stereoisomers of strigolactones, but not (2'S) stereoisomers. Interacts with MAX2. Forms a complex with MAX2 and SKP1A/ASK1 in presence of strigolactone. In terms of tissue distribution, expressed at high levels in rosette and cauline leaves and at lower levels in axillary buds, inflorescences, stems, roots and developing vascular tissue of cotyledons.

The protein localises to the cytoplasm. Its subcellular location is the nucleus. Its function is as follows. Involved in strigolactone signaling pathway. Does not move long distances acropetally in the plant to regulate shoot branching and is rapidly degraded in the presence of strigolactones. Functions downstream of strigolactone synthesis, as a component of hormone signaling and as an enzyme that participates in the conversion of strigolactones to the bioactive form. Acts probably as a strigolactone receptor. Strigolactones are hormones that inhibit tillering and shoot branching through the MAX-dependent pathway, contribute to the regulation of shoot architectural response to phosphate-limiting conditions and function as rhizosphere signal that stimulates hyphal branching of arbuscular mycorrhizal fungi and trigger seed germination of root parasitic weeds. Hydrolyzes methyl carlactonoate (MeCLA), but not carlactone (CL) or carlactonoic acid (CLA). Hydrolyzes the butenolide ring of strigolactones. The initial nucleophilic attack causes an electron shift, followed by the addition of a water molecule, to lead to the release of the ABC ring product and the formation of a 'Ser-97'-stabilized open lactone intermediate. Has no esterase activity for 4-nitrophenyl butyrate. Binds and hydrolyzes the synthetic strigolactone analog GR24 in vitro. Forms a stable covalent complex with the D-ring of strigolactone, which is essential for hormone bioactivity. The D-ring is attached to His-247 of the catalytic triad. The hydrolysis of strigolactone into a covalently linked intermediate molecule initiates a conformational change of D14 to facilitate interaction with MAX2 and formation of the D14-MAX2-SKP1/ASK1 complex to trigger strigolactone signaling. This mechanism defines D14 as a non-canonical hormone receptor with dual functions to generate and sense the active form of strigolactone. The sequence is that of Strigolactone esterase D14 from Arabidopsis thaliana (Mouse-ear cress).